The primary structure comprises 122 residues: Fluoride-specific ion channel FluC (122 aa).

Helical transmembrane passes span 5-25, 29-49, 65-85, and 93-113; these read FLIG…SGII, FGIP…VGFL, FIIT…YESF, and FIKS…MIYF. Residues Gly72 and Thr75 each coordinate Na(+).

Belongs to the fluoride channel Fluc/FEX (TC 1.A.43) family.

Its subcellular location is the cell membrane. The catalysed reaction is fluoride(in) = fluoride(out). Its activity is regulated as follows. Na(+) is not transported, but it plays an essential structural role and its presence is essential for fluoride channel function. Fluoride-specific ion channel. Important for reducing fluoride concentration in the cell, thus reducing its toxicity. This is Fluoride-specific ion channel FluC from Methanococcus vannielii (strain ATCC 35089 / DSM 1224 / JCM 13029 / OCM 148 / SB).